The sequence spans 450 residues: Phosphoglucosamine mutase (450 aa).

Residue S101 is the Phosphoserine intermediate of the active site. The Mg(2+) site is built by S101, D240, D242, and D244. Residue S101 is modified to Phosphoserine.

It belongs to the phosphohexose mutase family. Requires Mg(2+) as cofactor. In terms of processing, activated by phosphorylation.

The catalysed reaction is alpha-D-glucosamine 1-phosphate = D-glucosamine 6-phosphate. Functionally, catalyzes the conversion of glucosamine-6-phosphate to glucosamine-1-phosphate. This is Phosphoglucosamine mutase from Streptococcus agalactiae serotype Ia (strain ATCC 27591 / A909 / CDC SS700).